A 934-amino-acid polypeptide reads, in one-letter code: DNA topoisomerase 1 (934 aa).

Positions 1-20 (MADPKTKGRGSGGNGSGRRL) are disordered. The Toprim domain maps to 18-142 (RRLVIVESPT…VKRMVFHEIT (125 aa)). Residues glutamate 24 and aspartate 111 each coordinate Mg(2+). The Topo IA-type catalytic domain occupies 157–616 (DIDLVDAQET…FYFGGDHGVP (460 aa)). The interaction with DNA stretch occupies residues 191–196 (SAGRVQ). Tyrosine 342 serves as the catalytic O-(5'-phospho-DNA)-tyrosine intermediate. Disordered regions lie at residues 746-765 (AAQGVKKRQKAAGPKPRTGS), 842-892 (KRRG…KGDD), and 905-934 (LADRRARGPAKRPARKAARKVPAKKAAKRD). Residues 911 to 934 (RGPAKRPARKAARKVPAKKAAKRD) are compositionally biased toward basic residues.

It belongs to the type IA topoisomerase family. As to quaternary structure, monomer. Mg(2+) is required as a cofactor.

The enzyme catalyses ATP-independent breakage of single-stranded DNA, followed by passage and rejoining.. Its function is as follows. Releases the supercoiling and torsional tension of DNA, which is introduced during the DNA replication and transcription, by transiently cleaving and rejoining one strand of the DNA duplex. Introduces a single-strand break via transesterification at a target site in duplex DNA. The scissile phosphodiester is attacked by the catalytic tyrosine of the enzyme, resulting in the formation of a DNA-(5'-phosphotyrosyl)-enzyme intermediate and the expulsion of a 3'-OH DNA strand. The free DNA strand then undergoes passage around the unbroken strand, thus removing DNA supercoils. Finally, in the religation step, the DNA 3'-OH attacks the covalent intermediate to expel the active-site tyrosine and restore the DNA phosphodiester backbone. This chain is DNA topoisomerase 1, found in Mycobacterium bovis (strain ATCC BAA-935 / AF2122/97).